Consider the following 91-residue polypeptide: Protein transport protein Sec61 subunit beta (91 aa).

The tract at residues 1-45 (MSTSAQVPGGPAAQMKRRNNAQRQEAKASQRPTSTRSVGAGGSSS) is disordered. The Cytoplasmic portion of the chain corresponds to 1 to 62 (MSTSAQVPGG…DESQGLKVDP (62 aa)). The span at 30–45 (QRPTSTRSVGAGGSSS) shows a compositional bias: polar residues. A helical transmembrane segment spans residues 63-83 (VVVMVLSLGFIFSVVALHILA).

Belongs to the SEC61-beta family. In terms of assembly, heterotrimeric complex composed of SEC61, SEB1 and SSS1.

It is found in the endoplasmic reticulum membrane. Functionally, necessary for protein translocation in the endoplasmic reticulum. This chain is Protein transport protein Sec61 subunit beta (SBH1), found in Yarrowia lipolytica (strain CLIB 122 / E 150) (Yeast).